The sequence spans 865 residues: Protein translocase subunit SecA (865 aa).

ATP is bound by residues Q85, 103 to 107, and D505; that span reads GEGKT. Zn(2+) contacts are provided by C847, C849, C858, and H859.

This sequence belongs to the SecA family. In terms of assembly, monomer and homodimer. Part of the essential Sec protein translocation apparatus which comprises SecA, SecYEG and auxiliary proteins SecDF. Other proteins may also be involved. The cofactor is Zn(2+).

Its subcellular location is the cell membrane. It is found in the cytoplasm. It catalyses the reaction ATP + H2O + cellular proteinSide 1 = ADP + phosphate + cellular proteinSide 2.. Functionally, part of the Sec protein translocase complex. Interacts with the SecYEG preprotein conducting channel. Has a central role in coupling the hydrolysis of ATP to the transfer of proteins into and across the cell membrane, serving as an ATP-driven molecular motor driving the stepwise translocation of polypeptide chains across the membrane. The polypeptide is Protein translocase subunit SecA (Lactococcus lactis subsp. cremoris (strain MG1363)).